We begin with the raw amino-acid sequence, 500 residues long: Protein nucleotidyltransferase YdiU (500 aa).

Residues Gly-96, Gly-98, Arg-99, Lys-119, Asp-131, Gly-132, Arg-182, and Arg-189 each contribute to the ATP site. Catalysis depends on Asp-258, which acts as the Proton acceptor. Positions 259 and 268 each coordinate Mg(2+). Asp-268 is a binding site for ATP.

This sequence belongs to the SELO family. It depends on Mg(2+) as a cofactor. Mn(2+) is required as a cofactor.

The enzyme catalyses L-seryl-[protein] + ATP = 3-O-(5'-adenylyl)-L-seryl-[protein] + diphosphate. The catalysed reaction is L-threonyl-[protein] + ATP = 3-O-(5'-adenylyl)-L-threonyl-[protein] + diphosphate. It carries out the reaction L-tyrosyl-[protein] + ATP = O-(5'-adenylyl)-L-tyrosyl-[protein] + diphosphate. It catalyses the reaction L-histidyl-[protein] + UTP = N(tele)-(5'-uridylyl)-L-histidyl-[protein] + diphosphate. The enzyme catalyses L-seryl-[protein] + UTP = O-(5'-uridylyl)-L-seryl-[protein] + diphosphate. The catalysed reaction is L-tyrosyl-[protein] + UTP = O-(5'-uridylyl)-L-tyrosyl-[protein] + diphosphate. Its function is as follows. Nucleotidyltransferase involved in the post-translational modification of proteins. It can catalyze the addition of adenosine monophosphate (AMP) or uridine monophosphate (UMP) to a protein, resulting in modifications known as AMPylation and UMPylation. In Rhizobium etli (strain ATCC 51251 / DSM 11541 / JCM 21823 / NBRC 15573 / CFN 42), this protein is Protein nucleotidyltransferase YdiU.